We begin with the raw amino-acid sequence, 367 residues long: MTQRHLVVMAAGTGGHIIPGLAVAQEMQHRGWTVSWLGTEQGMENRLVPPAAESGIEMDTIAFSGLRGKGLLHTLTGGLRLLGAFAACAKILRRRATTAVLGMGGYVCFPGGLMASLLGKPLILVNADAALLMSNRALKPVADRIAFGFDGAAAATTRQAVVTGNPVRAEIETLPEPPVRYAGREGPLRVLVVGGSLGARVLNETLPQALALLAPAERPRVLHQTGQLNRDGVKEAYAAVGIDDGVEVLAFIDDMAARLAHCDVVICRAGAVTVSELCAAGVASVLVPLIVSTTSHQRDNALYMAQHGAAIHLPQSELTPQALAERLRTLDRPQLLGMAEKARALSRPRAAARVADEIERLVRKDGL.

Residues 13 to 15 (TGG), R168, S196, I252, and Q297 each bind UDP-N-acetyl-alpha-D-glucosamine.

This sequence belongs to the glycosyltransferase 28 family. MurG subfamily.

It is found in the cell inner membrane. It catalyses the reaction di-trans,octa-cis-undecaprenyl diphospho-N-acetyl-alpha-D-muramoyl-L-alanyl-D-glutamyl-meso-2,6-diaminopimeloyl-D-alanyl-D-alanine + UDP-N-acetyl-alpha-D-glucosamine = di-trans,octa-cis-undecaprenyl diphospho-[N-acetyl-alpha-D-glucosaminyl-(1-&gt;4)]-N-acetyl-alpha-D-muramoyl-L-alanyl-D-glutamyl-meso-2,6-diaminopimeloyl-D-alanyl-D-alanine + UDP + H(+). It functions in the pathway cell wall biogenesis; peptidoglycan biosynthesis. Cell wall formation. Catalyzes the transfer of a GlcNAc subunit on undecaprenyl-pyrophosphoryl-MurNAc-pentapeptide (lipid intermediate I) to form undecaprenyl-pyrophosphoryl-MurNAc-(pentapeptide)GlcNAc (lipid intermediate II). The sequence is that of UDP-N-acetylglucosamine--N-acetylmuramyl-(pentapeptide) pyrophosphoryl-undecaprenol N-acetylglucosamine transferase from Methylibium petroleiphilum (strain ATCC BAA-1232 / LMG 22953 / PM1).